The sequence spans 256 residues: Astacin-like metalloprotease toxin 2 (256 aa).

An N-terminal signal peptide occupies residues 1–24; that stretch reads MIPDVGFLVLLTGALFICIKAAPA. Residues 25 to 52 constitute a propeptide that is removed on maturation; it reads TTDVDPTFEGRIVMEGDILIREEQLTER. One can recognise a Peptidase M12A domain in the interval 53–250; that stretch reads NAIALENMRW…KKINTLYNCP (198 aa). 2 disulfides stabilise this stretch: cysteine 94-cysteine 249 and cysteine 117-cysteine 136. Residue histidine 144 coordinates Zn(2+). Glutamate 145 is a catalytic residue. 2 residues coordinate Zn(2+): histidine 148 and histidine 154.

As to quaternary structure, monomer. Zn(2+) serves as cofactor. Expressed by the venom gland.

It localises to the secreted. Inhibited by 1,10-phenanthroline. In terms of biological role, zinc metalloprotease. Provoques deadhesion of endothelial cells from cell cultures, and also degradation of fibronectin, fibrinogen and gelatin in vitro. Its role in the venom is not fully understood but it might act as a spreading factor that facilitates diffusion of other venom toxins. Alternatively, it might be involved in the proteolytic processing of other venom toxins or it might play a role in extra-oral digestion of prey. This is Astacin-like metalloprotease toxin 2 from Loxosceles intermedia (Brown spider).